The chain runs to 115 residues: ESX-1 secretion-associated protein EspL (115 aa).

The sequence is that of ESX-1 secretion-associated protein EspL from Mycobacterium tuberculosis (strain CDC 1551 / Oshkosh).